We begin with the raw amino-acid sequence, 428 residues long: Phosphoglucosamine mutase (428 aa).

Ser-96 (phosphoserine intermediate) is an active-site residue. The Mg(2+) site is built by Ser-96, Asp-229, Asp-231, and Asp-233. Residue Ser-96 is modified to Phosphoserine.

This sequence belongs to the phosphohexose mutase family. Mg(2+) is required as a cofactor. Activated by phosphorylation.

It carries out the reaction alpha-D-glucosamine 1-phosphate = D-glucosamine 6-phosphate. In terms of biological role, catalyzes the conversion of glucosamine-6-phosphate to glucosamine-1-phosphate. This is Phosphoglucosamine mutase from Thermotoga neapolitana (strain ATCC 49049 / DSM 4359 / NBRC 107923 / NS-E).